A 496-amino-acid polypeptide reads, in one-letter code: Angiopoietin-2 (496 aa).

A signal peptide spans 1 to 18; that stretch reads MWQLVFLTLSCDLAVATA. 6 N-linked (GlcNAc...) asparagine glycosylation sites follow: Asn-90, Asn-120, Asn-134, Asn-152, Asn-241, and Asn-304. Positions 167-249 form a coiled coil; sequence STNKLEKQIL…VNNSVLQKQQ (83 aa). One can recognise a Fibrinogen C-terminal domain in the interval 275-495; sequence KDEQIIFRDC…ATTMMIRPAD (221 aa). Residues Cys-284 and Cys-313 are joined by a disulfide bond. The Ca(2+) site is built by Asp-429, Asp-431, Cys-433, and Cys-435. Disulfide bonds link Cys-433–Cys-435 and Cys-437–Cys-450.

In terms of assembly, interacts with TEK/TIE2, competing for the same binding site as ANGPT1. Interacts with ITGA5. Interacts with SVEP1/polydom. Interacts with THBD; this interaction significantly inhibits the generation of activated PC and TAFIa/CPB2 by the thrombin/thrombomodulin complex.

It is found in the secreted. Functionally, binds to TEK/TIE2, competing for the ANGPT1 binding site, and modulating ANGPT1 signaling. Can induce tyrosine phosphorylation of TEK/TIE2 in the absence of ANGPT1. In the absence of angiogenic inducers, such as VEGF, ANGPT2-mediated loosening of cell-matrix contacts may induce endothelial cell apoptosis with consequent vascular regression. In concert with VEGF, it may facilitate endothelial cell migration and proliferation, thus serving as a permissive angiogenic signal. Involved in the regulation of lymphangiogenesis. The protein is Angiopoietin-2 (ANGPT2) of Bos taurus (Bovine).